A 119-amino-acid polypeptide reads, in one-letter code: Beta-2-microglobulin (119 aa).

Residues 1–20 (MARFVVVALLVLLSLSGLEA) form the signal peptide. An Ig-like C1-type domain is found at 25 to 114 (PKIQVYSRHP…VTLSTPKTVK (90 aa)). Cysteines 45 and 100 form a disulfide.

The protein belongs to the beta-2-microglobulin family. Heterodimer of an alpha chain and a beta chain. Beta-2-microglobulin is the beta-chain of major histocompatibility complex class I molecules.

The protein resides in the secreted. Component of the class I major histocompatibility complex (MHC). Involved in the presentation of peptide antigens to the immune system. This chain is Beta-2-microglobulin (B2M), found in Aotus lemurinus (Gray-bellied night monkey).